We begin with the raw amino-acid sequence, 442 residues long: ATP-dependent protease ATPase subunit HslU (442 aa).

Residues isoleucine 18, 60-65 (GVGKTE), aspartate 255, glutamate 320, and arginine 392 each bind ATP.

The protein belongs to the ClpX chaperone family. HslU subfamily. A double ring-shaped homohexamer of HslV is capped on each side by a ring-shaped HslU homohexamer. The assembly of the HslU/HslV complex is dependent on binding of ATP.

The protein resides in the cytoplasm. ATPase subunit of a proteasome-like degradation complex; this subunit has chaperone activity. The binding of ATP and its subsequent hydrolysis by HslU are essential for unfolding of protein substrates subsequently hydrolyzed by HslV. HslU recognizes the N-terminal part of its protein substrates and unfolds these before they are guided to HslV for hydrolysis. In Shewanella sp. (strain W3-18-1), this protein is ATP-dependent protease ATPase subunit HslU.